The sequence spans 1238 residues: MNPLLAPPYSGTLPFNSMDLSLQSARSAAQPLAKQPPNQQPHQTQQQQQSLIHAPNYPSIQNLTTNATPTSTQLQQQQQQEHLAAMAAAHVSLLQSSRQNQGAPSGNLSNGGDCESLLPPPPPTSVSGNTNHTGSNSSSNSGSNNHIASPHYMQSRDENFKLTQLKRSFEPDLSGKNPQKEKDFGYPSASSASKLPTHNVQQQHANKKPSPLRNYHQQQQPPYNLTPKYNGPQTPPTPQSPLAANPHQMLSPTMDYNQLHLHHQLNSSSGGSYQHMQQDQTQSQSHPQHLHYHNQHATSQTAPPPLLPPLLTSGQFHAQPQDASQQQTASSSQHQTHHSRTAQLTNLDQAVKHKPESEEQPVITDLSYRNSETDKTAANPVPEAPESPYLTTSNEESLESNSNSSNSRKRRKRKASMVMRVTPNENAPEGENSKPQHPQQAANLNNSCSPKKSPKNGGGEFQPFSTQKQSQTENEKTTQENGRGGSPAPAENNSNSNSSTLYNDNENPKTKKQRQALLQRNLTEQHRMQQDDEPPKNHTSPAMPPPSPQSNSSSSSSSSSSANTHSSQSSHAVNNIPKPEINNKATTDTPASPALVEQGDIDAKPAVSVHECDEEEEPAVNKVSPAHPDPPTTAAVAAPPATESPKKSSPAANSESCPFGEVEDKLEQMFAGIEEETERISSPEKPAEESAAMVAHNLTAQLALDPSKTLDTPAENQTSVLAVLAPNQTPTPEIRPVATKAAMKSTMPSPVHSPIPQSRSTSTPLVAGDDSKSNTPVPAKAPAPRRPPPRRLSMGMDASLLRFMIDDPPAKKPGRKKKVTKEPDFEDDDKPSTSAAAAAALAARQLSEAASATKSKPAAGAKKKNAGVKGKKGSAGKGNAKNAKQNGKKSARKPAFTTDEDSTPAPTNGGGSVPELRFKSPFILIKPDGSVSIKNTHSAEDVNEKQTKVKKAPHERKNLRGMHSSTLSNRYDADTTDSTWICVFCKRGPHKLGLGDLFGPYLVTSDCDEYRAAVQTPGAQDIDGMFVNKRRREDMVKGQERNLPAVPATLANIMQAPKISMHKRKRKQTHDSSISYSDDPNESRSQCSSVDLLDCSTESKFVETFRGMGKTSENGFEVWLHEDCAVWSNDIHLIGAHVNGLDAAVWDSTRYQCVLCQQTGASICCFQRCCKAAAHVPCGRSANWSLSEEDRKVYCHLHRHEPGVVEPIKTESIAPVEVSVATPPAPAPPPAFNIHSLP.

Disordered stretches follow at residues 22-83, 96-150, 169-250, 264-694, 739-915, 936-955, and 1057-1089; these read LQSA…QEHL, SSRQ…IASP, FEPD…HQML, QLNS…AAMV, TKAA…SVPE, THSA…APHE, and PKIS…QCSS. Positions 35 to 49 are enriched in low complexity; the sequence is QPPNQQPHQTQQQQQ. The segment covering 58–72 has biased composition (polar residues); the sequence is PSIQNLTTNATPTST. The span at 73-83 shows a compositional bias: low complexity; the sequence is QLQQQQQQEHL. The span at 96 to 110 shows a compositional bias: polar residues; it reads SSRQNQGAPSGNLSN. The segment covering 125 to 145 has biased composition (low complexity); that stretch reads SVSGNTNHTGSNSSSNSGSNN. Residues 188–204 show a composition bias toward polar residues; it reads SASSASKLPTHNVQQQH. Low complexity-rich tracts occupy residues 272–287, 309–334, and 393–406; these read SYQH…QSHP, PLLT…SSQH, and SNEE…NSSN. Residues 433 to 450 are compositionally biased toward polar residues; the sequence is SKPQHPQQAANLNNSCSP. Serine 453 carries the post-translational modification Phosphoserine. A compositionally biased stretch (polar residues) spans 463–472; that stretch reads PFSTQKQSQT. Over residues 523-536 the composition is skewed to basic and acidic residues; sequence TEQHRMQQDDEPPK. Composition is skewed to low complexity over residues 549 to 570 and 632 to 641; these read QSNS…SQSS and TTAAVAAPPA. A Phosphothreonine modification is found at threonine 642. Over residues 678–688 the composition is skewed to basic and acidic residues; that stretch reads ERISSPEKPAE. Serine 682, serine 749, and serine 753 each carry phosphoserine. Polar residues predominate over residues 755-764; sequence IPQSRSTSTP. A phosphoserine mark is found at serine 793 and serine 799. Positions 832-860 are enriched in low complexity; the sequence is STSAAAAAALAARQLSEAASATKSKPAAG. Positions 861–874 are enriched in basic residues; it reads AKKKNAGVKGKKGS. Residues 937–947 are compositionally biased toward basic and acidic residues; the sequence is HSAEDVNEKQT. Residues 1071-1089 show a composition bias toward polar residues; the sequence is DSSISYSDDPNESRSQCSS. The C2HC pre-PHD-type; degenerate zinc finger occupies 1089 to 1131; that stretch reads SVDLLDCSTESKFVETFRGMGKTSENGFEVWLHEDCAVWSNDI. Serine 1099 is subject to Phosphoserine. A PHD-type zinc finger spans residues 1151-1199; sequence YQCVLCQQTGASICCFQRCCKAAAHVPCGRSANWSLSEEDRKVYCHLHR.

This is an uncharacterized protein from Drosophila melanogaster (Fruit fly).